The chain runs to 236 residues: Ribonuclease 3 (236 aa).

One can recognise an RNase III domain in the interval F8–D130. E43 serves as a coordination point for Mg(2+). D47 is an active-site residue. Positions 116 and 119 each coordinate Mg(2+). The active site involves E119. The region spanning D157–Q227 is the DRBM domain.

This sequence belongs to the ribonuclease III family. In terms of assembly, homodimer. It depends on Mg(2+) as a cofactor.

Its subcellular location is the cytoplasm. It catalyses the reaction Endonucleolytic cleavage to 5'-phosphomonoester.. In terms of biological role, digests double-stranded RNA. Involved in the processing of primary rRNA transcript to yield the immediate precursors to the large and small rRNAs (23S and 16S). Processes some mRNAs, and tRNAs when they are encoded in the rRNA operon. Processes pre-crRNA and tracrRNA of type II CRISPR loci if present in the organism. The protein is Ribonuclease 3 of Chromobacterium violaceum (strain ATCC 12472 / DSM 30191 / JCM 1249 / CCUG 213 / NBRC 12614 / NCIMB 9131 / NCTC 9757 / MK).